The chain runs to 492 residues: 2,3-bisphosphoglycerate-independent phosphoglycerate mutase (492 aa).

Residues D11 and S61 each coordinate Mn(2+). S61 (phosphoserine intermediate) is an active-site residue. Residues H118, 147–148 (RD), R177, R183, 248–251 (RNDR), and K321 each bind substrate. Residues D387, H391, D428, H429, and H446 each coordinate Mn(2+).

It belongs to the BPG-independent phosphoglycerate mutase family. Monomer. Mn(2+) serves as cofactor.

The catalysed reaction is (2R)-2-phosphoglycerate = (2R)-3-phosphoglycerate. Its pathway is carbohydrate degradation; glycolysis; pyruvate from D-glyceraldehyde 3-phosphate: step 3/5. Its function is as follows. Catalyzes the interconversion of 2-phosphoglycerate and 3-phosphoglycerate. The sequence is that of 2,3-bisphosphoglycerate-independent phosphoglycerate mutase from Helicobacter acinonychis (strain Sheeba).